We begin with the raw amino-acid sequence, 216 residues long: Cytochrome c biogenesis ATP-binding export protein CcmA (216 aa).

The ABC transporter domain maps to Val11–Val216. Gly43–Thr50 lines the ATP pocket.

The protein belongs to the ABC transporter superfamily. CcmA exporter (TC 3.A.1.107) family. In terms of assembly, the complex is composed of two ATP-binding proteins (CcmA) and two transmembrane proteins (CcmB).

Its subcellular location is the cell inner membrane. It catalyses the reaction heme b(in) + ATP + H2O = heme b(out) + ADP + phosphate + H(+). Part of the ABC transporter complex CcmAB involved in the biogenesis of c-type cytochromes; once thought to export heme, this seems not to be the case, but its exact role is uncertain. Responsible for energy coupling to the transport system. This chain is Cytochrome c biogenesis ATP-binding export protein CcmA, found in Shewanella sp. (strain MR-4).